We begin with the raw amino-acid sequence, 481 residues long: tRNA sulfurtransferase (481 aa).

Residues Ala-54–Ile-156 form the THUMP domain. Residues Leu-174 to Val-175, Lys-256, Gly-278, and Gln-287 contribute to the ATP site. An intrachain disulfide couples Cys-334 to Cys-433. Residues Ile-388–Lys-463 enclose the Rhodanese domain. Catalysis depends on Cys-433, which acts as the Cysteine persulfide intermediate.

The protein belongs to the ThiI family.

It is found in the cytoplasm. The catalysed reaction is [ThiI sulfur-carrier protein]-S-sulfanyl-L-cysteine + a uridine in tRNA + 2 reduced [2Fe-2S]-[ferredoxin] + ATP + H(+) = [ThiI sulfur-carrier protein]-L-cysteine + a 4-thiouridine in tRNA + 2 oxidized [2Fe-2S]-[ferredoxin] + AMP + diphosphate. It catalyses the reaction [ThiS sulfur-carrier protein]-C-terminal Gly-Gly-AMP + S-sulfanyl-L-cysteinyl-[cysteine desulfurase] + AH2 = [ThiS sulfur-carrier protein]-C-terminal-Gly-aminoethanethioate + L-cysteinyl-[cysteine desulfurase] + A + AMP + 2 H(+). The protein operates within cofactor biosynthesis; thiamine diphosphate biosynthesis. In terms of biological role, catalyzes the ATP-dependent transfer of a sulfur to tRNA to produce 4-thiouridine in position 8 of tRNAs, which functions as a near-UV photosensor. Also catalyzes the transfer of sulfur to the sulfur carrier protein ThiS, forming ThiS-thiocarboxylate. This is a step in the synthesis of thiazole, in the thiamine biosynthesis pathway. The sulfur is donated as persulfide by IscS. The sequence is that of tRNA sulfurtransferase from Thermoplasma acidophilum (strain ATCC 25905 / DSM 1728 / JCM 9062 / NBRC 15155 / AMRC-C165).